Reading from the N-terminus, the 175-residue chain is T-cell surface glycoprotein CD3 epsilon chain (175 aa).

The signal sequence occupies residues 1 to 21; the sequence is MRCEVPLPLLGLLLCVVGAAA. Over 22–100 the chain is Extracellular; the sequence is QGGQEEFAVE…VCANCEELDT (79 aa). A helical transmembrane segment spans residues 101–121; the sequence is FTVVGIIAADLLITLGVLILV. The Cytoplasmic segment spans residues 122–175; it reads YYFSKNKKGQSRAAAGSRPRAQKMRRPPPVPNPDYEPIRKGQRDVYAGLEHRGF. Residues 133-163 form a disordered region; the sequence is RAAAGSRPRAQKMRRPPPVPNPDYEPIRKGQ. The 28-residue stretch at 146 to 173 folds into the ITAM domain; that stretch reads RRPPPVPNPDYEPIRKGQRDVYAGLEHR.

As to quaternary structure, the TCR/CD3 complex of T-lymphocytes consists of either a TCR alpha/beta or TCR gamma/delta heterodimer coexpressed at the cell surface with the invariant subunits of CD3 labeled gamma, delta, epsilon, zeta, and eta.

The protein localises to the cell membrane. In terms of biological role, the CD3 complex mediates signal transduction, resulting in T-cell activation and proliferation. Required for normal immune responses. This Gallus gallus (Chicken) protein is T-cell surface glycoprotein CD3 epsilon chain (CD3E).